Reading from the N-terminus, the 589-residue chain is Isocitrate dehydrogenase kinase/phosphatase (589 aa).

Residues 317–323 (AAGIKGM) and Lys-338 contribute to the ATP site. The active site involves Asp-373.

The protein belongs to the AceK family.

It is found in the cytoplasm. The catalysed reaction is L-seryl-[isocitrate dehydrogenase] + ATP = O-phospho-L-seryl-[isocitrate dehydrogenase] + ADP + H(+). In terms of biological role, bifunctional enzyme which can phosphorylate or dephosphorylate isocitrate dehydrogenase (IDH) on a specific serine residue. This is a regulatory mechanism which enables bacteria to bypass the Krebs cycle via the glyoxylate shunt in response to the source of carbon. When bacteria are grown on glucose, IDH is fully active and unphosphorylated, but when grown on acetate or ethanol, the activity of IDH declines drastically concomitant with its phosphorylation. The protein is Isocitrate dehydrogenase kinase/phosphatase of Colwellia psychrerythraea (strain 34H / ATCC BAA-681) (Vibrio psychroerythus).